Consider the following 2376-residue polypeptide: Reducing polyketide synthase DEP5 (2376 aa).

Positions 47 to 477 (LEPIAVVGMG…GTNAHTIIES (431 aa)) constitute a Ketosynthase family 3 (KS3) domain. Active-site for beta-ketoacyl synthase activity residues include Cys221, His358, and His399. A malonyl-CoA:ACP transacylase (MAT) domain region spans residues 593-906 (VFTGQGAQWA…QYLPTLVRGF (314 aa)). Ser685 (for malonyltransferase activity) is an active-site residue. Positions 983 to 1121 (HDVLGQLTTG…GSIAIRTSAR (139 aa)) are N-terminal hotdog fold. The dehydratase (DH) domain stretch occupies residues 983 to 1158 (HDVLGQLTTG…FNYGPTFQDM (176 aa)). One can recognise a PKS/mFAS DH domain in the interval 983 to 1286 (HDVLGQLTTG…CIAYEAAIPQ (304 aa)). The active-site Proton acceptor; for dehydratase activity is the His1015. Residues 1131–1286 (LPQRASGRLW…CIAYEAAIPQ (156 aa)) are C-terminal hotdog fold. The active-site Proton donor; for dehydratase activity is Asp1195. The interval 1659-1964 (GRIQAGKVVF…DSICDNKIVI (306 aa)) is enoyl reductase (ER) domain. The interval 1988 to 2163 (ATYLLVGCLG…KPACAVVLPM (176 aa)) is ketoreductase (KR) domain. The Carrier domain maps to 2289-2368 (DLVRDHFIAK…KFSELVCGAQ (80 aa)). An O-(pantetheine 4'-phosphoryl)serine modification is found at Ser2327.

It participates in polyketide biosynthesis. Its function is as follows. Reducing polyketide synthase; part of the gene cluster that mediates the biosynthesis of depudecin, a highly oxidized eleven-carbon linear polyketide that acts as a histone deacetylase (HDAC) inhibitor and makes a small contribution to pathogenesis. The reducing polyketide synthase DEP5 is the central enzyme in depudecin biosynthesis by yielding the backbone polyketide chain. The monooxygenases DEP2 and DEP4, as well as the uncharacterized protein DEP1, then act as tailoring enzymes to modify the intermediate polyketide chain into depudecin. The protein is Reducing polyketide synthase DEP5 of Alternaria brassicicola (Dark leaf spot agent).